The primary structure comprises 322 residues: MRWQWRIYEEPLQEPLTTAQGVWRSRSGIYLRLEDEQGQVGYGEIAPLPGWGSETLNADIALCQQLPGHLTPEIMATIPEALPAAQFGFATAWQSVGRLPYRVRPWPICALLGSGQAALEQWQQSWQRGQTTFKWKVGVMSPEEEQAILKALLAALPPGAKLRLDANGSWDRATANRWFAWLDRHGNGKIEYVEQPLPPDQWQALLSLAQTVTTAIALDESVVSAAEVQRWVDRGWPGFFVIKTALFGDPDSLSLLLRRGLEPQRLVFSSALEGAIARTAIFHLLETWQPCHALGFGVDRWRSAPLLTTLTAYERLWERLDQ.

Catalysis depends on Lys136, which acts as the Proton donor. Mg(2+) contacts are provided by Asp165, Glu194, and Asp219. Residue Lys243 is the Proton acceptor of the active site.

It belongs to the mandelate racemase/muconate lactonizing enzyme family. MenC type 1 subfamily. Monomer. The cofactor is a divalent metal cation.

It catalyses the reaction (1R,6R)-6-hydroxy-2-succinyl-cyclohexa-2,4-diene-1-carboxylate = 2-succinylbenzoate + H2O. It functions in the pathway quinol/quinone metabolism; 1,4-dihydroxy-2-naphthoate biosynthesis; 1,4-dihydroxy-2-naphthoate from chorismate: step 4/7. Its pathway is cofactor biosynthesis; phylloquinone biosynthesis. Converts 2-succinyl-6-hydroxy-2,4-cyclohexadiene-1-carboxylate (SHCHC) to 2-succinylbenzoate (OSB). Does not show N-succinylamino acid racemase (NSAR) activity with N-succinyl-L-phenylglycine as substrate. This chain is o-succinylbenzoate synthase, found in Thermosynechococcus vestitus (strain NIES-2133 / IAM M-273 / BP-1).